We begin with the raw amino-acid sequence, 119 residues long: Large ribosomal subunit protein uL22 (119 aa).

The protein belongs to the universal ribosomal protein uL22 family. Part of the 50S ribosomal subunit.

Functionally, this protein binds specifically to 23S rRNA; its binding is stimulated by other ribosomal proteins, e.g. L4, L17, and L20. It is important during the early stages of 50S assembly. It makes multiple contacts with different domains of the 23S rRNA in the assembled 50S subunit and ribosome. In terms of biological role, the globular domain of the protein is located near the polypeptide exit tunnel on the outside of the subunit, while an extended beta-hairpin is found that lines the wall of the exit tunnel in the center of the 70S ribosome. The polypeptide is Large ribosomal subunit protein uL22 (Trichormus variabilis (strain ATCC 29413 / PCC 7937) (Anabaena variabilis)).